Consider the following 498-residue polypeptide: Glycerol kinase (498 aa).

Threonine 12 provides a ligand contact to ADP. ATP-binding residues include threonine 12, threonine 13, and serine 14. Threonine 12 provides a ligand contact to sn-glycerol 3-phosphate. Arginine 16 is a binding site for ADP. Sn-glycerol 3-phosphate-binding residues include arginine 82, glutamate 83, tyrosine 134, and aspartate 243. Positions 82, 83, 134, 243, and 244 each coordinate glycerol. 2 residues coordinate ADP: threonine 265 and glycine 308. Residues threonine 265, glycine 308, glutamine 312, and glycine 411 each coordinate ATP. An ADP-binding site is contributed by glycine 411.

The protein belongs to the FGGY kinase family.

The catalysed reaction is glycerol + ATP = sn-glycerol 3-phosphate + ADP + H(+). Its pathway is polyol metabolism; glycerol degradation via glycerol kinase pathway; sn-glycerol 3-phosphate from glycerol: step 1/1. Its activity is regulated as follows. Inhibited by fructose 1,6-bisphosphate (FBP). Key enzyme in the regulation of glycerol uptake and metabolism. Catalyzes the phosphorylation of glycerol to yield sn-glycerol 3-phosphate. In Brucella canis (strain ATCC 23365 / NCTC 10854 / RM-666), this protein is Glycerol kinase.